We begin with the raw amino-acid sequence, 296 residues long: Acetylglutamate kinase (296 aa).

Substrate-binding positions include 69–70 (GG), R91, and N193.

The protein belongs to the acetylglutamate kinase family. ArgB subfamily.

The protein localises to the cytoplasm. It carries out the reaction N-acetyl-L-glutamate + ATP = N-acetyl-L-glutamyl 5-phosphate + ADP. It participates in amino-acid biosynthesis; L-arginine biosynthesis; N(2)-acetyl-L-ornithine from L-glutamate: step 2/4. In terms of biological role, catalyzes the ATP-dependent phosphorylation of N-acetyl-L-glutamate. The protein is Acetylglutamate kinase of Verminephrobacter eiseniae (strain EF01-2).